The chain runs to 257 residues: Short chain dehydrogenase helC (257 aa).

A signal peptide spans 1 to 22 (MNTAIITGAAQGVGLCIAEALA). V13 is an NADP(+) binding site. An N-linked (GlcNAc...) asparagine glycan is attached at N46. Residues D60 and N87 each coordinate NADP(+). Residue N110 is glycosylated (N-linked (GlcNAc...) asparagine). NADP(+)-binding residues include Y154, K158, I185, and T187. Catalysis depends on Y154, which acts as the Proton acceptor. The Lowers pKa of active site Tyr role is filled by K158.

Belongs to the short-chain dehydrogenases/reductases (SDR) family.

It participates in mycotoxin biosynthesis. Its function is as follows. Short chain dehydrogenase; part of the gene cluster that mediates the biosynthesis of helvolic acid, an antibacterial nortriterpenoid. Protostadienol synthase helA cyclizes (3S)-oxidosqualene to (17Z)-protosta-17(20),24-dien-3-beta-ol (protostadienol). The synthesis of protostadienol is followed by several steps of monooxygenation, dehydrogenation, and acyl transfer to yield the final helvolic acid. Following the cyclization to the tetracyclic protostadienol by helA, cytochrome P450 monooxygenases helB1-mediated and helB2-mediated oxidation at C-4 and C-16, acyltransferase helD2-dependent acetylation of 16-OH, oxidation of C-21 by cytochrome P450 monooxygenase helB4, and short chain dehydrogenase helC-dependent oxidative decarboxylation yield the fusidane skeleton. This intermediate is further modified in three additional steps mediated by the cytochrome P450 monooxygenase helB3, the acyltransferase helD1, and the 3-ketosteroid 1-dehydrogenase helE to give helvolic acid. Compared with the late stages in the biosynthesis of helvolic acid, enzymes involved in the early stage modifications act in a relatively strict order. The hydroxylation of C-16 by helB1 and subsequent acetylation by helD2 should occur before the helB3-mediated oxidation of C-21. C-4 demethylation in fusidane-type antibiotics proceeds in an unusual manner though it is also achieved by oxidative decarboxylation. The methyl group at C-4 beta position is oxidized by helB1 and subsequently removed by the short chain dehydrogenase helC. The sequence is that of Short chain dehydrogenase helC from Aspergillus fumigatus (strain ATCC MYA-4609 / CBS 101355 / FGSC A1100 / Af293) (Neosartorya fumigata).